We begin with the raw amino-acid sequence, 506 residues long: Dual specificity protein kinase shkC (506 aa).

Positions 1–21 are disordered; sequence MDSGLGSSYPEERSGPPEIRP. A compositionally biased stretch (basic and acidic residues) spans 10 to 21; sequence PEERSGPPEIRP. The Protein kinase domain occupies 24–284; sequence INFEELIGTG…IISALDHVII (261 aa). ATP contacts are provided by residues 30 to 38 and K51; that span reads IGTGSFGKV. D147 serves as the catalytic Proton acceptor. One can recognise an SH2 domain in the interval 396–488; the sequence is WFHGDLDTTE…KLDSQLGVPN (93 aa).

The protein belongs to the protein kinase superfamily. TKL Ser/Thr protein kinase family. SH2 domain-containing protein kinase subfamily.

The protein localises to the membrane. The catalysed reaction is L-seryl-[protein] + ATP = O-phospho-L-seryl-[protein] + ADP + H(+). It catalyses the reaction L-threonyl-[protein] + ATP = O-phospho-L-threonyl-[protein] + ADP + H(+). In terms of biological role, required for proper chemotaxis and phagocytosis; proper spatiotemporal control of F-actin levels in chemotaxing cells. Negative regulator of the PI3K (phosphatidylinositol 3 kinase) pathway. Predominantly phosphorylates serines and threonines and tyrosines at a lower level. This Dictyostelium discoideum (Social amoeba) protein is Dual specificity protein kinase shkC (shkC).